Reading from the N-terminus, the 298-residue chain is MEEFDSEDFSTSEEDEDYVPSGGEYSEDDINELVKEDEVDGEEETQKTKGTKRKAESVLARKRKQGGLSLEEEGEEDANEESGGSSSEEEDAATGQEKGIESEDARKKKEDELWASFLNDVGPKSKVPPSTHVKTGEETEETSSSHLVKAEKLEKPQETEKVKITKVFDFAGEEVRVIKEVDATSKEAKSFFKQNEKEKPQSNISSSVPSLSAGSGLKRSSGMSSLLGKIGAKKQKMSTLEKSKLDWESFKEEEGIGEELAIHNRGKEGYIERKAFLDRVDHRQFEIERDLRLSQMKP.

Composition is skewed to acidic residues over residues 1 to 18, 25 to 43, and 70 to 80; these read MEEFDSEDFSTSEEDEDY, YSEDDINELVKEDEVDGEE, and LEEEGEEDANE. 2 disordered regions span residues 1 to 158 and 191 to 223; these read MEEF…KPQE and FFKQNEKEKPQSNISSSVPSLSAGSGLKRSSGM. Residues S82, S85, and S86 each carry the phosphoserine modification. Over residues 98–112 the composition is skewed to basic and acidic residues; sequence KGIESEDARKKKEDE. Phosphoserine is present on S116. 2 stretches are compositionally biased toward basic and acidic residues: residues 148-158 and 191-200; these read VKAEKLEKPQE and FFKQNEKEKP. A Glycyl lysine isopeptide (Lys-Gly) (interchain with G-Cter in SUMO2) cross-link involves residue K149. The interval 177-216 is hydrophilic; that stretch reads VIKEVDATSKEAKSFFKQNEKEKPQSNISSSVPSLSAGSG. Residues 205–217 show a composition bias toward low complexity; that stretch reads SSSVPSLSAGSGL. S215 is subject to Phosphoserine. One can recognise a BCNT-C domain in the interval 217–298; that stretch reads LKRSSGMSSL…RDLRLSQMKP (82 aa). N6-methyllysine is present on K218. S249 is subject to Phosphoserine.

The protein localises to the chromosome. It localises to the centromere. Its subcellular location is the kinetochore. May play a role during embryogenesis. The chain is Craniofacial development protein 1 (CFDP1) from Muntiacus reevesi (Reeves' muntjac).